We begin with the raw amino-acid sequence, 254 residues long: Ribosomal RNA small subunit methyltransferase J (254 aa).

Residues 107 to 108, 123 to 124, and Asp-177 each bind S-adenosyl-L-methionine; these read RD and ER.

The protein belongs to the methyltransferase superfamily. RsmJ family.

The protein localises to the cytoplasm. The catalysed reaction is guanosine(1516) in 16S rRNA + S-adenosyl-L-methionine = N(2)-methylguanosine(1516) in 16S rRNA + S-adenosyl-L-homocysteine + H(+). Specifically methylates the guanosine in position 1516 of 16S rRNA. This Histophilus somni (strain 129Pt) (Haemophilus somnus) protein is Ribosomal RNA small subunit methyltransferase J.